Reading from the N-terminus, the 142-residue chain is Hemoglobin subunit alpha (142 aa).

In terms of domain architecture, Globin spans 2–142 (VLSDANKQEI…LVHQLSSKYR (141 aa)). H60 is an O2 binding site. Residue H89 participates in heme b binding.

The protein belongs to the globin family. In terms of assembly, heterotetramer of two alpha chains and two beta chains. Red blood cells.

Its function is as follows. Involved in oxygen transport from gills to the various peripheral tissues. In Bathyraja eatonii (Eaton's skate), this protein is Hemoglobin subunit alpha (HBA).